We begin with the raw amino-acid sequence, 209 residues long: Ribosomal RNA small subunit methyltransferase G (209 aa).

S-adenosyl-L-methionine-binding positions include G72, L77, 123 to 124, and R138; that span reads AE.

This sequence belongs to the methyltransferase superfamily. RNA methyltransferase RsmG family.

It localises to the cytoplasm. Functionally, specifically methylates the N7 position of guanine in position 518 of 16S rRNA. The sequence is that of Ribosomal RNA small subunit methyltransferase G from Leifsonia xyli subsp. xyli (strain CTCB07).